The following is a 563-amino-acid chain: Dihydroxy-acid dehydratase (563 aa).

Cysteine 50 provides a ligand contact to [2Fe-2S] cluster. A Mg(2+)-binding site is contributed by aspartate 82. Cysteine 123 lines the [2Fe-2S] cluster pocket. Residues aspartate 124 and lysine 125 each contribute to the Mg(2+) site. At lysine 125 the chain carries N6-carboxylysine. Residue cysteine 195 coordinates [2Fe-2S] cluster. Glutamate 447 contacts Mg(2+). Serine 473 serves as the catalytic Proton acceptor.

It belongs to the IlvD/Edd family. In terms of assembly, homodimer. The cofactor is [2Fe-2S] cluster. It depends on Mg(2+) as a cofactor.

The enzyme catalyses (2R)-2,3-dihydroxy-3-methylbutanoate = 3-methyl-2-oxobutanoate + H2O. The catalysed reaction is (2R,3R)-2,3-dihydroxy-3-methylpentanoate = (S)-3-methyl-2-oxopentanoate + H2O. It participates in amino-acid biosynthesis; L-isoleucine biosynthesis; L-isoleucine from 2-oxobutanoate: step 3/4. The protein operates within amino-acid biosynthesis; L-valine biosynthesis; L-valine from pyruvate: step 3/4. Its function is as follows. Functions in the biosynthesis of branched-chain amino acids. Catalyzes the dehydration of (2R,3R)-2,3-dihydroxy-3-methylpentanoate (2,3-dihydroxy-3-methylvalerate) into 2-oxo-3-methylpentanoate (2-oxo-3-methylvalerate) and of (2R)-2,3-dihydroxy-3-methylbutanoate (2,3-dihydroxyisovalerate) into 2-oxo-3-methylbutanoate (2-oxoisovalerate), the penultimate precursor to L-isoleucine and L-valine, respectively. The sequence is that of Dihydroxy-acid dehydratase from Nostoc sp. (strain PCC 7120 / SAG 25.82 / UTEX 2576).